Reading from the N-terminus, the 134-residue chain is Small ribosomal subunit protein uS11 (134 aa).

The interval 114–134 (DVTPVPSDSTRRKGGRRGRRL) is disordered. Residues 125 to 134 (RKGGRRGRRL) show a composition bias toward basic residues.

Belongs to the universal ribosomal protein uS11 family.

The chain is Small ribosomal subunit protein uS11 (RPS14) from Candida albicans (Yeast).